Consider the following 196-residue polypeptide: Protease (196 aa).

Active-site residues include histidine 54, aspartate 70, and cysteine 121.

The protein belongs to the peptidase C5 family. In terms of assembly, interacts with protease cofactor pVI-C; this interaction is necessary for protease activation.

The protein resides in the virion. Its subcellular location is the host nucleus. The catalysed reaction is Cleaves proteins of the adenovirus and its host cell at two consensus sites: -Yaa-Xaa-Gly-Gly-|-Xaa- and -Yaa-Xaa-Gly-Xaa-|-Gly- (in which Yaa is Met, Ile or Leu, and Xaa is any amino acid).. With respect to regulation, requires DNA and protease cofactor for maximal activation. Inside nascent virions, becomes partially activated by binding to the viral DNA, allowing it to cleave the cofactor that binds to the protease and fully activates it. Actin, like the viral protease cofactor, seems to act as a cofactor in the cleavage of cytokeratin 18 and of actin itself. Its function is as follows. Cleaves viral precursor proteins (pTP, pIIIa, pVI, pVII, pVIII, and pX) inside newly assembled particles giving rise to mature virions. Protease complexed to its cofactor slides along the viral DNA to specifically locate and cleave the viral precursors. Mature virions have a weakened organization compared to the unmature virions, thereby facilitating subsequent uncoating. Without maturation, the particle lacks infectivity and is unable to uncoat. Late in adenovirus infection, in the cytoplasm, may participate in the cytoskeleton destruction. Cleaves host cell cytoskeletal keratins K7 and K18. The polypeptide is Protease (Bos taurus (Bovine)).